The chain runs to 837 residues: Ribosome-releasing factor 2, mitochondrial (837 aa).

A mitochondrion-targeting transit peptide spans 1 to 29 (MFSINARTKVPIWVPFIARKGFSMSTRQL). Positions 40-331 (LNTRNIGIIA…GVVDYLPSPL (292 aa)) constitute a tr-type G domain. GTP is bound by residues 49–56 (AHIDAGKT), 113–117 (DTPGH), and 167–170 (NKMD). The interval 338-359 (ITASTSKVSKKQKQKKNSKVSS) is disordered. Residues 345-355 (VSKKQKQKKNS) are compositionally biased toward basic residues.

Belongs to the TRAFAC class translation factor GTPase superfamily. Classic translation factor GTPase family. EF-G/EF-2 subfamily.

It is found in the mitochondrion. Functionally, mitochondrial GTPase that mediates the disassembly of ribosomes from messenger RNA at the termination of mitochondrial protein biosynthesis. Not involved in the GTP-dependent ribosomal translocation step during translation elongation. The polypeptide is Ribosome-releasing factor 2, mitochondrial (Meyerozyma guilliermondii (strain ATCC 6260 / CBS 566 / DSM 6381 / JCM 1539 / NBRC 10279 / NRRL Y-324) (Yeast)).